The primary structure comprises 301 residues: Protein FdhE homolog (301 aa).

The protein belongs to the FdhE family.

It is found in the cytoplasm. Its function is as follows. Necessary for formate dehydrogenase activity. The chain is Protein FdhE homolog from Shewanella baltica (strain OS185).